A 37-amino-acid polypeptide reads, in one-letter code: Photosystem II reaction center protein L (37 aa).

Residues 1 to 13 are Cytoplasmic-facing; it reads MEPNPNRQPVELN. Residues 14–35 traverse the membrane as a helical segment; it reads RTSLYLGLLLILVLALLFSSYF. The Lumenal portion of the chain corresponds to 36–37; that stretch reads FN.

PSII is composed of 1 copy each of membrane proteins PsbA, PsbB, PsbC, PsbD, PsbE, PsbF, PsbH, PsbI, PsbJ, PsbK, PsbL, PsbM, PsbT, PsbX, PsbY, PsbZ, Psb30/Ycf12, peripheral proteins PsbO, CyanoQ (PsbQ), PsbU, PsbV and a large number of cofactors. It forms dimeric complexes. Part of a photosystem II (PSII) assembly intermediate complex PSII-I; crystallized from a strain deleted of psbJ, it forms monomeric PSII before addition of the oxygen evolving complex. PSII-I includes 3 assembly factors not found in mature PSII (Psb27, Psb28 and Psb34). Requires PSII binds multiple chlorophylls, carotenoids and specific lipids. as cofactor.

It localises to the cellular thylakoid membrane. In terms of biological role, one of the components of the core complex of photosystem II (PSII). PSII is a light-driven water:plastoquinone oxidoreductase that uses light energy to abstract electrons from H(2)O, generating O(2) and a proton gradient subsequently used for ATP formation. It consists of a core antenna complex that captures photons, and an electron transfer chain that converts photonic excitation into a charge separation. This subunit is found at the monomer-monomer interface and is required for correct PSII assembly and/or dimerization. This subunit may make specific contacts with lipid(s). This Thermosynechococcus vestitus (strain NIES-2133 / IAM M-273 / BP-1) protein is Photosystem II reaction center protein L.